The sequence spans 346 residues: uncharacterized protein (346 aa).

The next 8 helical transmembrane spans lie at 15 to 35 (YLRG…LLTV), 55 to 75 (VEAR…YLFI), 93 to 113 (ILVL…EALT), 139 to 159 (ILLL…PLIL), 182 to 202 (IFTF…YCYV), 229 to 249 (LGVA…LLLL), 269 to 289 (LTNY…FHLF), and 295 to 315 (LQSL…SAMW).

To E.coli YeiB, B.subtilis YxaH and B.subtilis YrkO.

It localises to the cell membrane. Functionally, involved in transport. This is an uncharacterized protein from Bacillus acidopullulyticus.